Reading from the N-terminus, the 687-residue chain is Glycine--tRNA ligase beta subunit (687 aa).

Belongs to the class-II aminoacyl-tRNA synthetase family. Tetramer of two alpha and two beta subunits.

The protein resides in the cytoplasm. The enzyme catalyses tRNA(Gly) + glycine + ATP = glycyl-tRNA(Gly) + AMP + diphosphate. In Ruegeria sp. (strain TM1040) (Silicibacter sp.), this protein is Glycine--tRNA ligase beta subunit.